A 492-amino-acid polypeptide reads, in one-letter code: 3-octaprenyl-4-hydroxybenzoate carboxy-lyase (492 aa).

N175 contacts Mn(2+). Prenylated FMN is bound by residues 178-180, 192-194, and 197-198; these read IYR, RWL, and RG. E241 serves as a coordination point for Mn(2+). D290 serves as the catalytic Proton donor.

This sequence belongs to the UbiD family. As to quaternary structure, homohexamer. It depends on prenylated FMN as a cofactor. Mn(2+) serves as cofactor.

The protein localises to the cell membrane. The enzyme catalyses a 4-hydroxy-3-(all-trans-polyprenyl)benzoate + H(+) = a 2-(all-trans-polyprenyl)phenol + CO2. It functions in the pathway cofactor biosynthesis; ubiquinone biosynthesis. Catalyzes the decarboxylation of 3-octaprenyl-4-hydroxy benzoate to 2-octaprenylphenol, an intermediate step in ubiquinone biosynthesis. The protein is 3-octaprenyl-4-hydroxybenzoate carboxy-lyase of Salmonella choleraesuis (strain SC-B67).